The sequence spans 674 residues: Kelch repeat and BTB domain-containing protein 6 (674 aa).

The interval 1–28 (MQSREDAPRSRRLASPRGGKRPKKIHKP) is disordered. Residues 10–27 (SRRLASPRGGKRPKKIHK) show a composition bias toward basic residues. The BTB domain maps to 63-138 (CDVTIEVVTP…CYTGRVSLSE (76 aa)). Kelch repeat units follow at residues 386–435 (AVCI…YLNG), 436–484 (YIYI…VIRD), 486–523 (LYAL…VFNE), 524–564 (EIYC…IIKH), 567–616 (KLLL…CLSA), and 642–673 (TEWD…RVAP). The disordered stretch occupies residues 631–674 (TEEEEIPSESSTEWDLGGFSEPDSESGSSSSLSDDDFWVRVAPQ). Residues 668 to 671 (WVRV) carry the ATG8 interaction motif (AIM) motif.

In terms of assembly, core component of a BCR3 (BTB-CUL3-RBX1) E3 ubiquitin ligase complex, also named Cul3-RING ubiquitin ligase complex CUL3(KBTBD6/7), composed of CUL3, RBX1, KBTBD6 and KBTBD7. Interacts with GABARAP; the interaction is direct and is required for the ubiquitination of TIAM1. Interacts with GABARAPL1, GABARAPL2 and MAP1LC3B; the interaction is direct.

It is found in the cytoplasm. The protein localises to the nucleus. It functions in the pathway protein modification; protein ubiquitination. In terms of biological role, as part of the CUL3(KBTBD6/7) E3 ubiquitin ligase complex functions as a substrate adapter for the RAC1 guanine exchange factor (GEF) TIAM1, mediating its 'Lys-48' ubiquitination and proteasomal degradation. By controlling this ubiquitination, regulates RAC1 signal transduction and downstream biological processes including the organization of the cytoskeleton, cell migration and cell proliferation. Ubiquitination of TIAM1 requires the membrane-associated protein GABARAP which may restrict locally the activity of the complex. This chain is Kelch repeat and BTB domain-containing protein 6, found in Homo sapiens (Human).